We begin with the raw amino-acid sequence, 241 residues long: MAQVSMRDMLNAGVHFGHQTRYWNPQMKPYIFGARNGVHIINLEKTLPLFNDALAELTRIASNNGKILFVGTKRAASDAVKAAAVESQQFYVNHRWLGGMLTNWKTVRQSIKRLKDLEAQSQDGTFDKLTKKEALDRTRDMAKLELSLGGIKDMAGLPDAIFVIGADYEHIAIKEANNLGIPVFAIVDTNASPAGVNHVIPGNDDAARAIQLYLDAAVAAIKEGRGQETVAAEFVAEEAAE.

It belongs to the universal ribosomal protein uS2 family.

The protein is Small ribosomal subunit protein uS2 of Glaesserella parasuis serovar 5 (strain SH0165) (Haemophilus parasuis).